The primary structure comprises 72 residues: LITAF domain-containing protein (72 aa).

An LITAF domain is found at Met1 to Arg71. 2 residues coordinate Zn(2+): Cys7 and Cys10. A membrane-binding amphipathic helix region spans residues Pro22–Leu45. Positions 59 and 62 each coordinate Zn(2+).

The protein belongs to the CDIP1/LITAF family.

It localises to the membrane. The protein is LITAF domain-containing protein of Homo sapiens (Human).